Reading from the N-terminus, the 88-residue chain is Small ribosomal subunit protein bS20 (88 aa).

It belongs to the bacterial ribosomal protein bS20 family.

Its function is as follows. Binds directly to 16S ribosomal RNA. In Clostridioides difficile (strain 630) (Peptoclostridium difficile), this protein is Small ribosomal subunit protein bS20.